The primary structure comprises 636 residues: Chaperone protein HtpG (636 aa).

An a; substrate-binding region spans residues M1–R329. Residues E330–K550 are b. Residues L551–L636 form a c region.

It belongs to the heat shock protein 90 family. In terms of assembly, homodimer.

It is found in the cytoplasm. Functionally, molecular chaperone. Has ATPase activity. This chain is Chaperone protein HtpG, found in Oleidesulfovibrio alaskensis (strain ATCC BAA-1058 / DSM 17464 / G20) (Desulfovibrio alaskensis).